The sequence spans 228 residues: Lipoprotein-releasing system ATP-binding protein LolD (228 aa).

Residues 6-228 (IKCLNVVKGY…EAGVLNKQGQ (223 aa)) form the ABC transporter domain. ATP is bound at residue 42–49 (GASGSGKS).

Belongs to the ABC transporter superfamily. Lipoprotein translocase (TC 3.A.1.125) family. The complex is composed of two ATP-binding proteins (LolD) and two transmembrane proteins (LolC and LolE).

The protein localises to the cell inner membrane. Part of the ABC transporter complex LolCDE involved in the translocation of mature outer membrane-directed lipoproteins, from the inner membrane to the periplasmic chaperone, LolA. Responsible for the formation of the LolA-lipoprotein complex in an ATP-dependent manner. The chain is Lipoprotein-releasing system ATP-binding protein LolD from Saccharophagus degradans (strain 2-40 / ATCC 43961 / DSM 17024).